The sequence spans 247 residues: Nodulation protein H (247 aa).

The hydrophobic stretch occupies residues 1–16 (MTHSTLPPRPFAILAM).

Required for the formation of sulfated nod factor. Proposed to transfer activated sulfate (PAPS) to a N-acetylglucosamine of the nod factor. This is Nodulation protein H (nodH) from Rhizobium meliloti (Ensifer meliloti).